A 156-amino-acid chain; its full sequence is MIKEFNTQTTLNVGLEALWAAQSKDITLVVPKVLPNIVKDVQVIEGDGGVGTKLIFNFLPGIAPVNYQREVITEYDELSHTIGLQVVEGGYLNQGLSYYKTTFQFSAISENKTLVNVKISYDHESELIEEKVKPTKTSESTLFYLGQLEKFLLNGA.

Gln-22, Gln-68, and Thr-141 together coordinate gibberellin A3.

This sequence belongs to the BetVI family.

In terms of biological role, binds gibberellin A3 (GA3) in vitro. This is Phytohormone-binding protein from Medicago truncatula (Barrel medic).